The primary structure comprises 640 residues: Pro-neuregulin-1, membrane-bound isoform (640 aa).

Residues 1-19 constitute a propeptide that is removed on maturation; that stretch reads MSERKEGRGKGKGKKKERG. Positions 1 to 53 are disordered; it reads MSERKEGRGKGKGKKKERGSGKKPESAAGSQSPALPPRLKEMKSQESAAGSKL. Over 20 to 242 the chain is Extracellular; that stretch reads SGKKPESAAG…EKAEELYQKR (223 aa). The Ig-like C2-type domain maps to 37–128; it reads PRLKEMKSQE…GNDSASANIT (92 aa). An intrachain disulfide couples C57 to C112. 3 N-linked (GlcNAc...) asparagine glycosylation sites follow: N120, N126, and N164. Residues 178–222 form the EGF-like domain; it reads HLVKCAEKEKTFCVNGGECFMVKDLSNPSRYLCKCQPGFTGARCT. 3 disulfide bridges follow: C182–C196, C190–C210, and C212–C221. Residues 243–265 traverse the membrane as a helical segment; it reads VLTITGICIALLVVGIMCVVAYC. Topologically, residues 266 to 640 are cytoplasmic; the sequence is KTKKQRKKLH…VIANQDPIAV (375 aa). The segment covering 334–350 has biased composition (low complexity); the sequence is TSHYTSTAHHSTTVTQT. Disordered stretches follow at residues 334-360, 375-399, 433-461, and 524-588; these read TSHY…NGHT, SVEN…GGPR, RMSP…SMTV, and EYET…DTPF. Residues 351-360 are compositionally biased toward polar residues; that stretch reads PSHSWSNGHT. The span at 387–397 shows a compositional bias: gly residues; sequence GPRGRLNGTGG. Basic residues predominate over residues 542–552; the sequence is ANSRRAKRTKP. Residues 563–574 show a composition bias toward low complexity; the sequence is DSNTSSQSSNSE.

The protein belongs to the neuregulin family. As to quaternary structure, the cytoplasmic domain interacts with the LIM domain region of LIMK1. Forms a ternary complex with ERBB3 and ITGAV:ITGB3 or ITGA6:ITGB4. Interacts with NRDC and BACE1. Post-translationally, proteolytic cleavage close to the plasma membrane on the external face leads to the release of the soluble growth factor form. In terms of processing, N- and O-glycosylated. Extensive glycosylation precedes the proteolytic cleavage. Type I isoforms are the predominant forms expressed in the endocardium. Isoform alpha is expressed in breast, ovary, testis, prostate, heart, skeletal muscle, lung, placenta liver, kidney, salivary gland, small intestine and brain, but not in uterus, stomach, pancreas, and spleen. Isoform 3 is the predominant form in mesenchymal cells and in non-neuronal organs, whereas isoform 6 is the major neuronal form. Isoform 8 is expressed in spinal cord and brain. Isoform 9 is the major form in skeletal muscle cells; in the nervous system it is expressed in spinal cord and brain. Also detected in adult heart, placenta, lung, liver, kidney, and pancreas. Isoform 10 is expressed in nervous system: spinal cord motor neurons, dorsal root ganglion neurons, and brain. Predominant isoform expressed in sensory and motor neurons. Not detected in adult heart, placenta, lung, liver, skeletal muscle, kidney, and pancreas. Not expressed in fetal lung, liver and kidney. Type IV isoforms are brain-specific.

Its subcellular location is the cell membrane. The protein localises to the secreted. It is found in the nucleus. The protein resides in the membrane. Its function is as follows. Direct ligand for ERBB3 and ERBB4 tyrosine kinase receptors. Concomitantly recruits ERBB1 and ERBB2 coreceptors, resulting in ligand-stimulated tyrosine phosphorylation and activation of the ERBB receptors. The multiple isoforms perform diverse functions such as inducing growth and differentiation of epithelial, glial, neuronal, and skeletal muscle cells; inducing expression of acetylcholine receptor in synaptic vesicles during the formation of the neuromuscular junction; stimulating lobuloalveolar budding and milk production in the mammary gland and inducing differentiation of mammary tumor cells; stimulating Schwann cell proliferation; implication in the development of the myocardium such as trabeculation of the developing heart. Isoform 10 may play a role in motor and sensory neuron development. Binds to ERBB4. Binds to ERBB3. Acts as a ligand for integrins and binds (via EGF domain) to integrins ITGAV:ITGB3 or ITGA6:ITGB4. Its binding to integrins and subsequent ternary complex formation with integrins and ERRB3 are essential for NRG1-ERBB signaling. Induces the phosphorylation and activation of MAPK3/ERK1, MAPK1/ERK2 and AKT1. Ligand-dependent ERBB4 endocytosis is essential for the NRG1-mediated activation of these kinases in neurons. The polypeptide is Pro-neuregulin-1, membrane-bound isoform (NRG1) (Homo sapiens (Human)).